Consider the following 275-residue polypeptide: MTSVAGPHKRLEGKVAIITGGASGIGACTAELFHENGAKVVIADIQDDLGQALATKLGGKACYIHCDVSKEDEVINLVDTTVAKYGRLDIMFNNAGIIEGQGLPVSVVESEKSDLDRLLSVNLGGAFLGAKHATRVMVQQRKGCILFTSSVCTSIAGLSGHAYAASKSGVCGLAKNLTPELGKYGIRVNCISPYGLVTGVSNVSGEGEANREFVEAMLSELGTLSGQTLRADGIAKAALFLASDEAYYVSGINMVVDGGYSVVNPRLVDSINSKL.

17–41 (IITGGASGIGACTAELFHENGAKVV) is an NAD(+) binding site. Substrate is bound at residue Ser150. Tyr163 (proton acceptor) is an active-site residue.

It belongs to the short-chain dehydrogenases/reductases (SDR) family.

Functionally, has no tropinone reductase activity. The polypeptide is Tropinone reductase-like 2 (Erythroxylum coca (Coca plant)).